We begin with the raw amino-acid sequence, 343 residues long: Ricin B-like lectin R40G2 (343 aa).

The Ricin B-type lectin domain occupies 194–340 (TVRVFSAAGE…CEGDNQRWKI (147 aa)).

Its function is as follows. Lectin which binds carbohydrates in vitro. Interacts through its lectin domain with glycan structures containing specific motifs. The chain is Ricin B-like lectin R40G2 from Oryza sativa subsp. japonica (Rice).